The following is a 907-amino-acid chain: Protein translocase subunit SecA (907 aa).

Residues Q87, 105-109, and D512 contribute to the ATP site; that span reads GEGKT. Residues C891, C893, C902, and H903 each coordinate Zn(2+).

It belongs to the SecA family. As to quaternary structure, monomer and homodimer. Part of the essential Sec protein translocation apparatus which comprises SecA, SecYEG and auxiliary proteins SecDF-YajC and YidC. Zn(2+) is required as a cofactor.

The protein localises to the cell inner membrane. It is found in the cytoplasm. The enzyme catalyses ATP + H2O + cellular proteinSide 1 = ADP + phosphate + cellular proteinSide 2.. Part of the Sec protein translocase complex. Interacts with the SecYEG preprotein conducting channel. Has a central role in coupling the hydrolysis of ATP to the transfer of proteins into and across the cell membrane, serving both as a receptor for the preprotein-SecB complex and as an ATP-driven molecular motor driving the stepwise translocation of polypeptide chains across the membrane. This is Protein translocase subunit SecA from Tolumonas auensis (strain DSM 9187 / NBRC 110442 / TA 4).